The primary structure comprises 205 residues: Putative 3-methyladenine DNA glycosylase (205 aa).

Belongs to the DNA glycosylase MPG family.

This is Putative 3-methyladenine DNA glycosylase from Clostridium acetobutylicum (strain ATCC 824 / DSM 792 / JCM 1419 / IAM 19013 / LMG 5710 / NBRC 13948 / NRRL B-527 / VKM B-1787 / 2291 / W).